The sequence spans 182 residues: Rhodanese-like domain-containing protein 15, chloroplastic (182 aa).

The transit peptide at 1 to 65 (METTAFNTTS…TTSRGNVAAE (65 aa)) directs the protein to the chloroplast. One can recognise a Rhodanese domain in the interval 82–182 (AQAGYRYLDV…WTENELPVEE (101 aa)). Cys142 functions as the Cysteine persulfide intermediate in the catalytic mechanism.

The protein resides in the plastid. It is found in the chloroplast. The protein localises to the thylakoid. The sequence is that of Rhodanese-like domain-containing protein 15, chloroplastic (STR15) from Arabidopsis thaliana (Mouse-ear cress).